Consider the following 38-residue polypeptide: Large ribosomal subunit protein bL36 (38 aa).

This sequence belongs to the bacterial ribosomal protein bL36 family.

This is Large ribosomal subunit protein bL36 from Chlorobaculum parvum (strain DSM 263 / NCIMB 8327) (Chlorobium vibrioforme subsp. thiosulfatophilum).